Reading from the N-terminus, the 334-residue chain is ATP-dependent kinase YFH7 (334 aa).

30 to 38 provides a ligand contact to ATP; the sequence is GHPGSGKST.

The protein belongs to the YFH7 family.

Its function is as follows. ATP-dependent kinase that could be involved in endoplasmic reticulum membrane assembly. This is ATP-dependent kinase YFH7 (YFH7) from Eremothecium gossypii (strain ATCC 10895 / CBS 109.51 / FGSC 9923 / NRRL Y-1056) (Yeast).